Here is a 344-residue protein sequence, read N- to C-terminus: uncharacterized protein (344 aa).

Over 1 to 98 the chain is Cytoplasmic; sequence MIDFVKSRDT…NNDEIGIWNY (98 aa). The chain crosses the membrane as a helical span at residues 99–119; the sequence is ISVAEMGGVLLFLSYWIWTCL. Histidine 120 is a topological domain (lumenal). A helical membrane pass occupies residues 121 to 141; that stretch reads FSKIIFPAQKVICLYIFLFAL. Topologically, residues 142-169 are cytoplasmic; it reads NQTLQECIEEYVFSSECIKYRQFYSVYE. A helical membrane pass occupies residues 170–192; that stretch reads IIDFLRTNFYRLFVIYCALGFGI. Residues 193-198 are Lumenal-facing; it reads TRTVPK. A helical transmembrane segment spans residues 199-219; that stretch reads YLMIKGISIVIALCSVYWISL. Residues 220–222 lie on the Cytoplasmic side of the membrane; it reads YKD. Residues 223 to 243 form a helical membrane-spanning segment; that stretch reads VYVVSEIFDMIQYEVFPAIWV. Topologically, residues 244–273 are lumenal; sequence YSICHLLKQCTSVTTYENASKARFFRRMLN. Residues 274 to 294 form a helical membrane-spanning segment; that stretch reads AFIFIFCASPMLHYLSNIIFG. At 295–344 the chain is on the cytoplasmic side; sequence NFDYRLSVIIGDLFTFMEKIAFPCYIMFPTHNEALAYNRNVAEEAQEKMI.

Its subcellular location is the endoplasmic reticulum membrane. This is an uncharacterized protein from Schizosaccharomyces pombe (strain 972 / ATCC 24843) (Fission yeast).